The sequence spans 628 residues: 1,4-alpha-glucan branching enzyme GlgB (628 aa).

The Nucleophile role is filled by Asp304. Glu355 (proton donor) is an active-site residue.

The protein belongs to the glycosyl hydrolase 13 family. GlgB subfamily. Monomer.

The enzyme catalyses Transfers a segment of a (1-&gt;4)-alpha-D-glucan chain to a primary hydroxy group in a similar glucan chain.. It functions in the pathway glycan biosynthesis; glycogen biosynthesis. Functionally, catalyzes the formation of the alpha-1,6-glucosidic linkages in glycogen by scission of a 1,4-alpha-linked oligosaccharide from growing alpha-1,4-glucan chains and the subsequent attachment of the oligosaccharide to the alpha-1,6 position. The protein is 1,4-alpha-glucan branching enzyme GlgB of Streptococcus mutans serotype c (strain ATCC 700610 / UA159).